The primary structure comprises 131 residues: Small ribosomal subunit protein bS6 (131 aa).

Residues 96–131 (VTEASPMVKAKDERRERRDDFANETADDAEAGDSEE) are disordered. Basic and acidic residues predominate over residues 104–116 (KAKDERRERRDDF). Acidic residues predominate over residues 120–131 (TADDAEAGDSEE).

Belongs to the bacterial ribosomal protein bS6 family.

Its function is as follows. Binds together with bS18 to 16S ribosomal RNA. This Salmonella arizonae (strain ATCC BAA-731 / CDC346-86 / RSK2980) protein is Small ribosomal subunit protein bS6.